Here is a 212-residue protein sequence, read N- to C-terminus: Histidine biosynthesis bifunctional protein HisIE (212 aa).

Residues 1-109 (MRPDFHKQEL…ELIPFDDSDI (109 aa)) form a phosphoribosyl-AMP cyclohydrolase region. The tract at residues 110-212 (FSELEKQIID…KKEFHTRTAD (103 aa)) is phosphoribosyl-ATP pyrophosphohydrolase.

In the N-terminal section; belongs to the PRA-CH family. It in the C-terminal section; belongs to the PRA-PH family.

It localises to the cytoplasm. The enzyme catalyses 1-(5-phospho-beta-D-ribosyl)-ATP + H2O = 1-(5-phospho-beta-D-ribosyl)-5'-AMP + diphosphate + H(+). It catalyses the reaction 1-(5-phospho-beta-D-ribosyl)-5'-AMP + H2O = 1-(5-phospho-beta-D-ribosyl)-5-[(5-phospho-beta-D-ribosylamino)methylideneamino]imidazole-4-carboxamide. The protein operates within amino-acid biosynthesis; L-histidine biosynthesis; L-histidine from 5-phospho-alpha-D-ribose 1-diphosphate: step 2/9. It participates in amino-acid biosynthesis; L-histidine biosynthesis; L-histidine from 5-phospho-alpha-D-ribose 1-diphosphate: step 3/9. The polypeptide is Histidine biosynthesis bifunctional protein HisIE (hisI) (Lactococcus lactis subsp. lactis (strain IL1403) (Streptococcus lactis)).